The following is a 432-amino-acid chain: Trigger factor (432 aa).

Positions 162-247 (GDLVKFDYQG…VKEVQAPVLP (86 aa)) constitute a PPIase FKBP-type domain.

It belongs to the FKBP-type PPIase family. Tig subfamily.

The protein resides in the cytoplasm. The catalysed reaction is [protein]-peptidylproline (omega=180) = [protein]-peptidylproline (omega=0). Functionally, involved in protein export. Acts as a chaperone by maintaining the newly synthesized protein in an open conformation. Functions as a peptidyl-prolyl cis-trans isomerase. The polypeptide is Trigger factor (Thiobacillus denitrificans (strain ATCC 25259 / T1)).